The primary structure comprises 714 residues: Glutamine-dependent NAD(+) synthetase (714 aa).

In terms of domain architecture, CN hydrolase spans 5–275 (ITLATCNLNQ…VEVVTATVDL (271 aa)). Glutamate 45 serves as the catalytic Proton acceptor; for glutaminase activity. The active-site For glutaminase activity is the lysine 114. Cysteine 175 serves as the catalytic Nucleophile; for glutaminase activity. Positions 329–714 (YHSPEEEIAL…GSTLDIMSID (386 aa)) are ligase. Residue 359-366 (PLSGGIDS) coordinates ATP. Residue serine 361 is part of the active site.

This sequence in the C-terminal section; belongs to the NAD synthetase family.

The enzyme catalyses deamido-NAD(+) + L-glutamine + ATP + H2O = L-glutamate + AMP + diphosphate + NAD(+) + H(+). It participates in cofactor biosynthesis; NAD(+) biosynthesis; NAD(+) from deamido-NAD(+) (L-Gln route): step 1/1. The sequence is that of Glutamine-dependent NAD(+) synthetase (QNS1) from Saccharomyces cerevisiae (strain ATCC 204508 / S288c) (Baker's yeast).